A 187-amino-acid polypeptide reads, in one-letter code: Oligoribonuclease (187 aa).

The Exonuclease domain maps to L7 to M170. Residue Y128 is part of the active site.

Belongs to the oligoribonuclease family.

The protein resides in the cytoplasm. Functionally, 3'-to-5' exoribonuclease specific for small oligoribonucleotides. This chain is Oligoribonuclease, found in Neisseria meningitidis serogroup A / serotype 4A (strain DSM 15465 / Z2491).